The primary structure comprises 564 residues: Type 2 DNA topoisomerase 6 subunit B (564 aa).

Residues N46, D78, 99–100 (TK), 109–116 (GQQGIGIS), and K471 contribute to the ATP site.

It belongs to the TOP6B family. Homodimer. Heterotetramer of two Top6A and two Top6B chains.

The enzyme catalyses ATP-dependent breakage, passage and rejoining of double-stranded DNA.. Functionally, relaxes both positive and negative superturns and exhibits a strong decatenase activity. The protein is Type 2 DNA topoisomerase 6 subunit B of Pyrococcus abyssi (strain GE5 / Orsay).